The following is a 140-amino-acid chain: Small ribosomal subunit protein uS19 (140 aa).

It belongs to the universal ribosomal protein uS19 family.

Its function is as follows. Protein S19 forms a complex with S13 that binds strongly to the 16S ribosomal RNA. The chain is Small ribosomal subunit protein uS19 from Metallosphaera sedula (strain ATCC 51363 / DSM 5348 / JCM 9185 / NBRC 15509 / TH2).